Consider the following 335-residue polypeptide: Large ribosomal subunit protein uL10 (335 aa).

Positions 304–335 (GAAAPVEEAPVEEKKEEKKEEAAPAAGLGMLF) are disordered. Positions 314 to 325 (VEEKKEEKKEEA) are enriched in basic and acidic residues.

The protein belongs to the universal ribosomal protein uL10 family. As to quaternary structure, part of the 50S ribosomal subunit. Forms part of the ribosomal stalk which helps the ribosome interact with GTP-bound translation factors. Forms a heptameric L10(L12)2(L12)2(L12)2 complex, where L10 forms an elongated spine to which the L12 dimers bind in a sequential fashion.

In terms of biological role, forms part of the ribosomal stalk, playing a central role in the interaction of the ribosome with GTP-bound translation factors. The polypeptide is Large ribosomal subunit protein uL10 (Methanococcus maripaludis (strain C6 / ATCC BAA-1332)).